The following is a 423-amino-acid chain: Histidine--tRNA ligase (423 aa).

It belongs to the class-II aminoacyl-tRNA synthetase family. In terms of assembly, homodimer.

It is found in the cytoplasm. The catalysed reaction is tRNA(His) + L-histidine + ATP = L-histidyl-tRNA(His) + AMP + diphosphate + H(+). In Haemophilus influenzae (strain ATCC 51907 / DSM 11121 / KW20 / Rd), this protein is Histidine--tRNA ligase (hisS).